The following is a 289-amino-acid chain: Oxaloacetate decarboxylase (289 aa).

A substrate-binding site is contributed by Ser-50. Asp-88 serves as a coordination point for Mg(2+). Positions 159 and 235 each coordinate substrate.

Belongs to the isocitrate lyase/PEP mutase superfamily. Oxaloacetate decarboxylase family. As to quaternary structure, homotetramer; dimer of dimers. Mg(2+) serves as cofactor.

The catalysed reaction is oxaloacetate + H(+) = pyruvate + CO2. Functionally, catalyzes the decarboxylation of oxaloacetate into pyruvate. Seems to play a role in maintaining cellular concentrations of bicarbonate and pyruvate. This is Oxaloacetate decarboxylase from Pseudomonas syringae pv. tomato (strain ATCC BAA-871 / DC3000).